The sequence spans 82 residues: MGFGGISLWQLLIVLAIIVLLFGTKKLRGIGGDLGGAVKGFKKAMSDEKNTDKEKPEQIQKSEESAPLDSAHTEKNKDNNKV.

A helical transmembrane segment spans residues 2-22; it reads GFGGISLWQLLIVLAIIVLLF. Residues 43–82 form a disordered region; it reads KAMSDEKNTDKEKPEQIQKSEESAPLDSAHTEKNKDNNKV. Basic and acidic residues-rich tracts occupy residues 44 to 64 and 71 to 82; these read AMSD…KSEE and AHTEKNKDNNKV.

It belongs to the TatA/E family. The Tat system comprises two distinct complexes: a TatABC complex, containing multiple copies of TatA, TatB and TatC subunits, and a separate TatA complex, containing only TatA subunits. Substrates initially bind to the TatABC complex, which probably triggers association of the separate TatA complex to form the active translocon.

Its subcellular location is the cell inner membrane. Functionally, part of the twin-arginine translocation (Tat) system that transports large folded proteins containing a characteristic twin-arginine motif in their signal peptide across membranes. TatA could form the protein-conducting channel of the Tat system. This is Sec-independent protein translocase protein TatA from Pseudoalteromonas translucida (strain TAC 125).